A 76-amino-acid polypeptide reads, in one-letter code: MPYKTKSDLPESVKHVLPSHAQDIYKEAFNSAWDQYKDKEDRRDDASREETAHKVAWAAVKHEYAKGDDDKWHKKS.

The protein belongs to the ChaB family. Monomer.

Functionally, might be a regulator of the sodium-potassium/proton antiporter ChaA. The sequence is that of Putative cation transport regulator ChaB from Escherichia coli O157:H7.